The sequence spans 62 residues: uncharacterized protein (62 aa).

4Fe-4S ferredoxin-type domains follow at residues 2-31 (AVTI…EIEG) and 32-62 (DKVV…VEPE). 8 residues coordinate [4Fe-4S] cluster: C10, C15, C18, C22, C42, C45, C48, and C52.

Requires [4Fe-4S] cluster as cofactor.

This is an uncharacterized protein from Methanocaldococcus jannaschii (strain ATCC 43067 / DSM 2661 / JAL-1 / JCM 10045 / NBRC 100440) (Methanococcus jannaschii).